Reading from the N-terminus, the 229-residue chain is Isopentenyl-diphosphate delta-isomerase (229 aa).

Lys-39 contacts substrate. Mg(2+) is bound by residues His-43 and His-54. A Nudix hydrolase domain is found at 52 to 202; that stretch reads LLHRAFSMFI…QYGFTPWFKL (151 aa). 2 residues coordinate substrate: Gln-72 and Lys-77. Cys-89 is a catalytic residue. Position 90 (Ser-90) interacts with substrate. Mg(2+) contacts are provided by Glu-152 and Glu-154. The active site involves Glu-154.

Belongs to the IPP isomerase type 1 family. Mg(2+) is required as a cofactor.

The protein resides in the cytoplasm. It localises to the nucleus. The catalysed reaction is isopentenyl diphosphate = dimethylallyl diphosphate. Its pathway is isoprenoid biosynthesis; dimethylallyl diphosphate biosynthesis; dimethylallyl diphosphate from isopentenyl diphosphate: step 1/1. Its function is as follows. Isopentenyl-diphosphate delta-isomerase; part of the second module of ergosterol biosynthesis pathway that includes the middle steps of the pathway. Idi1 catalyzes the 1,3-allylic rearrangement of isopentenyl (IPP) to its highly electrophilic allylic isomer, dimethylallyl diphosphate (DMAPP). The second module is carried out in the vacuole and involves the formation of farnesyl diphosphate, which is also an important intermediate in the biosynthesis of ubiquinone, dolichol, heme and prenylated proteins. Activity by the mevalonate kinase erg12 first converts mevalonate into 5-phosphomevalonate. 5-phosphomevalonate is then further converted to 5-diphosphomevalonate by the phosphomevalonate kinase erg8. The diphosphomevalonate decarboxylase mvd1 then produces isopentenyl diphosphate. The isopentenyl-diphosphate delta-isomerase idi1 then catalyzes the 1,3-allylic rearrangement of the homoallylic substrate isopentenyl (IPP) to its highly electrophilic allylic isomer, dimethylallyl diphosphate (DMAPP). Finally the farnesyl diphosphate synthase fps1 catalyzes the sequential condensation of isopentenyl pyrophosphate with dimethylallyl pyrophosphate, and then with the resultant geranylpyrophosphate to the ultimate product farnesyl pyrophosphate. This chain is Isopentenyl-diphosphate delta-isomerase, found in Schizosaccharomyces pombe (strain 972 / ATCC 24843) (Fission yeast).